The primary structure comprises 721 residues: Protein mu-NS (721 aa).

The segment at 1-13 (MASFKGFSANTVP) is interaction with sigma-NS. Residues 1 to 38 (MASFKGFSANTVPVSKAKRDISSLAATPGLRSQSFTPS) form an RNA-binding region. Positions 14 to 40 (VSKAKRDISSLAATPGLRSQSFTPSVD) are interaction with mu-2. The tract at residues 471–721 (SNDVTDGIKL…IDFSVPTDEL (251 aa)) is involved in the formation of factory-like inclusions. 2 coiled-coil regions span residues 522–559 (PLLSQLRELSSEVTRLQMELSRAQSLNAQLEADVKSAQ) and 628–684 (LMNG…ALNQ).

It belongs to the orthoreovirus mu-NS protein family. Interacts with mu-2. Interacts with sigma-NS; in viral factories. Interacts with the inner capsid proteins lambda-1 and sigma-2, and outer capsid protein lambda-2; in viral factories. The N-terminus is blocked.

It is found in the host cytoplasm. Non-structural protein implicated with protein sigma-NS in forming the matrix of viral factories, which are large inclusions in the host cytoplasm where replication intermediates are assembled and viral RNA replication takes place. Together with mu-2, recruits the other core proteins to these factories. Binds RNA and recruits viral mRNAs to sites of viral replication. This chain is Protein mu-NS (M3), found in Reovirus type 3 (strain Dearing) (T3D).